The chain runs to 435 residues: ATP-dependent protease ATPase subunit HslU (435 aa).

Residues I18, 60–65 (GVGKTE), D248, E313, and R385 each bind ATP.

Belongs to the ClpX chaperone family. HslU subfamily. A double ring-shaped homohexamer of HslV is capped on each side by a ring-shaped HslU homohexamer. The assembly of the HslU/HslV complex is dependent on binding of ATP.

Its subcellular location is the cytoplasm. Its function is as follows. ATPase subunit of a proteasome-like degradation complex; this subunit has chaperone activity. The binding of ATP and its subsequent hydrolysis by HslU are essential for unfolding of protein substrates subsequently hydrolyzed by HslV. HslU recognizes the N-terminal part of its protein substrates and unfolds these before they are guided to HslV for hydrolysis. This Ruegeria pomeroyi (strain ATCC 700808 / DSM 15171 / DSS-3) (Silicibacter pomeroyi) protein is ATP-dependent protease ATPase subunit HslU.